Reading from the N-terminus, the 67-residue chain is DNA-directed RNA polymerase subunit omega (67 aa).

The protein belongs to the RNA polymerase subunit omega family. In terms of assembly, the RNAP catalytic core consists of 2 alpha, 1 beta, 1 beta' and 1 omega subunit. When a sigma factor is associated with the core the holoenzyme is formed, which can initiate transcription.

It carries out the reaction RNA(n) + a ribonucleoside 5'-triphosphate = RNA(n+1) + diphosphate. Promotes RNA polymerase assembly. Latches the N- and C-terminal regions of the beta' subunit thereby facilitating its interaction with the beta and alpha subunits. The sequence is that of DNA-directed RNA polymerase subunit omega from Paracidovorax citrulli (strain AAC00-1) (Acidovorax citrulli).